A 484-amino-acid chain; its full sequence is MSYPQGYLYQPSASLALYSCPAYSTSVISGPRTDELGRSSSGSAFSPYAGSTAFTAPSPGYNSHLQYGADPAAAAAAAFSYVGSPYDHTPGMAGSLGYHPYAAPLGSYPYGDPAYRKNATRDATATLKAWLNEHRKNPYPTKGEKIMLAIITKMTLTQVSTWFANARRRLKKENKMTWTPRNRSEDEEEEENIDLEKNDEDEPQKPEDKGDLEGPESGGAEQKATAGCERLQGPLSPAGKETEGSLSDSDFKESSSEGRHDELPRPPRAGESSPAGPATARLAEDAGPHYPASVPAPGPHPSAGELPPGSGGSSVIHSPPPPPPPPPAVLAKPKLWSLAEIATSSDKVKDGGGGSEGSPCPPCPGPMGGQTLGGSRASPAPAPARSPSAQCPFPGGTVLSRPLYYTAPFYPGYTNYGSFGHLHGHPGPGPSPTAGPGSHFNGLNQTVLNRADVLAKDPKMLRSQSQLDLCKDSPYELKKGMSDI.

A DNA-binding region (homeobox; TALE-type) is located at residues 112 to 174; the sequence is DPAYRKNATR…NARRRLKKEN (63 aa). 2 disordered regions span residues 176–393 and 424–443; these read MTWT…QCPF and GHPGPGPSPTAGPGSHFNGL. Over residues 185–202 the composition is skewed to acidic residues; the sequence is EDEEEEENIDLEKNDEDE. Basic and acidic residues-rich tracts occupy residues 203 to 212 and 249 to 265; these read PQKPEDKGDL and SDFKESSSEGRHDELPR. The residue at position 273 (Ser-273) is a Phosphoserine. The span at 318–328 shows a compositional bias: pro residues; that stretch reads SPPPPPPPPPA. Low complexity predominate over residues 375–389; the sequence is SRASPAPAPARSPSA. A Phosphoserine modification is found at Ser-465.

It belongs to the TALE/IRO homeobox family. Not expressed in the developing metanephric kidney or adult kidney.

The protein resides in the nucleus. Establishes the cardiac repolarization gradient by its repressive actions on the KCND2 potassium-channel gene. Required for retinal cone bipolar cell differentiation. May regulate contrast adaptation in the retina and control specific aspects of visual function in circuits of the mammalian retina. Involved in craniofacial and gonadal development. Modulates the migration of progenitor cell populations in branchial arches and gonads by repressing CXCL12. This is Iroquois-class homeodomain protein IRX-5 (Irx5) from Mus musculus (Mouse).